The following is a 109-amino-acid chain: Nucleoid-associated protein Asuc_0997 (109 aa).

Residues 1–23 form a disordered region; sequence MFGKGGLGGLMKQAQQMQERMQK.

It belongs to the YbaB/EbfC family. In terms of assembly, homodimer.

The protein resides in the cytoplasm. The protein localises to the nucleoid. Binds to DNA and alters its conformation. May be involved in regulation of gene expression, nucleoid organization and DNA protection. This Actinobacillus succinogenes (strain ATCC 55618 / DSM 22257 / CCUG 43843 / 130Z) protein is Nucleoid-associated protein Asuc_0997.